A 226-amino-acid chain; its full sequence is Fibronectin type III domain-containing protein 10 (226 aa).

The signal sequence occupies residues 1–20; that stretch reads MRAPPLLLLLAACAPPPCAA. The Extracellular segment spans residues 21 to 182; that stretch reads AAPTPPGWEP…FTAEPAGMQD (162 aa). The 93-residue stretch at 74–166 folds into the Fibronectin type-III domain; the sequence is PAGRSLRASV…PAAAAPETPE (93 aa). Asn86 and Asn109 each carry an N-linked (GlcNAc...) asparagine glycan. The chain crosses the membrane as a helical span at residues 183 to 203; it reads IVVAMTAVGGSICVMLVVICL. The Cytoplasmic portion of the chain corresponds to 204–226; that stretch reads LVAYITENLMRPALARPGLRRHP.

It localises to the membrane. This chain is Fibronectin type III domain-containing protein 10 (FNDC10), found in Homo sapiens (Human).